The chain runs to 367 residues: Phosphoribosylaminoimidazole-succinocarboxamide synthase (367 aa).

The protein belongs to the SAICAR synthetase family.

It carries out the reaction 5-amino-1-(5-phospho-D-ribosyl)imidazole-4-carboxylate + L-aspartate + ATP = (2S)-2-[5-amino-1-(5-phospho-beta-D-ribosyl)imidazole-4-carboxamido]succinate + ADP + phosphate + 2 H(+). Its pathway is purine metabolism; IMP biosynthesis via de novo pathway; 5-amino-1-(5-phospho-D-ribosyl)imidazole-4-carboxamide from 5-amino-1-(5-phospho-D-ribosyl)imidazole-4-carboxylate: step 1/2. This Saccharophagus degradans (strain 2-40 / ATCC 43961 / DSM 17024) protein is Phosphoribosylaminoimidazole-succinocarboxamide synthase.